The sequence spans 296 residues: tRNA dimethylallyltransferase (296 aa).

9–16 serves as a coordination point for ATP; the sequence is GPTAVGKT. Substrate is bound at residue 11–16; sequence TAVGKT. Residues 34–37 form an interaction with substrate tRNA region; the sequence is DSRQ.

The protein belongs to the IPP transferase family. In terms of assembly, monomer. Mg(2+) serves as cofactor.

The catalysed reaction is adenosine(37) in tRNA + dimethylallyl diphosphate = N(6)-dimethylallyladenosine(37) in tRNA + diphosphate. Functionally, catalyzes the transfer of a dimethylallyl group onto the adenine at position 37 in tRNAs that read codons beginning with uridine, leading to the formation of N6-(dimethylallyl)adenosine (i(6)A). This Chloroflexus aurantiacus (strain ATCC 29366 / DSM 635 / J-10-fl) protein is tRNA dimethylallyltransferase.